A 132-amino-acid polypeptide reads, in one-letter code: uncharacterized protein (132 aa).

Residues 66–86 (LPPMLLVLAALFVKGLIPLVL) traverse the membrane as a helical segment.

The protein resides in the membrane. This is an uncharacterized protein from Saccharomyces cerevisiae (strain ATCC 204508 / S288c) (Baker's yeast).